The following is a 744-amino-acid chain: Tripartite motif-containing protein 2 (744 aa).

Ser-10 bears the Phosphoserine mark. The RING-type zinc-finger motif lies at Cys-23–Arg-64. Residues Gly-113–Leu-154 form a B box-type zinc finger. Residues Cys-118, His-121, Cys-141, and His-146 each coordinate Zn(2+). Residues Thr-320–Val-421 form a Filamin repeat. Thr-371 bears the Phosphothreonine mark. Phosphoserine occurs at positions 375, 424, and 428. The segment at Glu-432 to Lys-462 is disordered. 6 NHL repeats span residues Ile-473–Asp-516, Lys-520–Asp-563, Gly-564–Asn-605, Val-609–Glu-652, Met-656–Ser-699, and Gly-700–Leu-743.

It belongs to the TRIM/RBCC family. As to quaternary structure, forms homooligomers. Interacts with TRIM3; this interaction reduces TRIM2 activity. Interacts with myosin V; myosin V may not be a substrate for ubiquitination. Interacts with NEFL. Interacts with phosphorylated BCL2L11. Interacts with SIRPA. Post-translationally, RING-type zinc finger-dependent and UBE2D1-dependent autoubiquitination.

The catalysed reaction is S-ubiquitinyl-[E2 ubiquitin-conjugating enzyme]-L-cysteine + [acceptor protein]-L-lysine = [E2 ubiquitin-conjugating enzyme]-L-cysteine + N(6)-ubiquitinyl-[acceptor protein]-L-lysine.. Its pathway is protein modification; protein ubiquitination. Its function is as follows. UBE2D1-dependent E3 ubiquitin-protein ligase that mediates the ubiquitination of NEFL and of phosphorylated BCL2L11. Plays a neuroprotective function. May play a role in neuronal rapid ischemic tolerance. Plays a role in antiviral immunity and limits New World arenavirus infection independently of its ubiquitin ligase activity. The polypeptide is Tripartite motif-containing protein 2 (Trim2) (Rattus norvegicus (Rat)).